Here is a 107-residue protein sequence, read N- to C-terminus: Histone H4 (107 aa).

The segment covering 1-16 has biased composition (gly residues); that stretch reads MPGRGKGGKGGKGYGK. The disordered stretch occupies residues 1–23; it reads MPGRGKGGKGGKGYGKVGAKRHA. Residues 17-21 mediate DNA binding; sequence VGAKR.

Belongs to the histone H4 family. The nucleosome is a histone octamer containing two molecules each of H2A, H2B, H3 and H4 assembled in one H3-H4 heterotetramer and two H2A-H2B heterodimers. The octamer wraps approximately 147 bp of DNA.

It is found in the nucleus. The protein localises to the chromosome. Functionally, core component of nucleosome. Nucleosomes wrap and compact DNA into chromatin, limiting DNA accessibility to the cellular machineries which require DNA as a template. Histones thereby play a central role in transcription regulation, DNA repair, DNA replication and chromosomal stability. DNA accessibility is regulated via a complex set of post-translational modifications of histones, also called histone code, and nucleosome remodeling. This is Histone H4 from Euplotes crassus.